Reading from the N-terminus, the 1404-residue chain is Clustered mitochondria protein homolog (1404 aa).

In terms of domain architecture, Clu spans 357 to 646; that stretch reads HTHHADALRS…RLNPVDINWL (290 aa). The segment covering 528–540 has biased composition (acidic residues); it reads ADELPEADGETTE. Disordered regions lie at residues 528-561, 706-735, 996-1046, and 1337-1372; these read ADELPEADGETTELAEAAPEKKSPEAKLAQSNKA, DAKAKEAASKEDGEKTEAPEVEAEEPERLD, GCHG…ARAT, and SERQARLPASRRGNSNAGGGAAAITGAGTTASGNGT. Basic and acidic residues predominate over residues 706-723; sequence DAKAKEAASKEDGEKTEA. Composition is skewed to low complexity over residues 1021–1046 and 1358–1372; these read NEQQNGVKKSNVGAAAAKPTKAARAT and AAITGAGTTASGNGT.

Belongs to the CLU family. As to quaternary structure, may associate with the eukaryotic translation initiation factor 3 (eIF-3) complex.

It is found in the cytoplasm. Its function is as follows. mRNA-binding protein involved in proper cytoplasmic distribution of mitochondria. The sequence is that of Clustered mitochondria protein homolog from Mycosarcoma maydis (Corn smut fungus).